The following is a 75-amino-acid chain: Small ribosomal subunit protein bS18 (75 aa).

The protein belongs to the bacterial ribosomal protein bS18 family. In terms of assembly, part of the 30S ribosomal subunit. Forms a tight heterodimer with protein bS6.

Functionally, binds as a heterodimer with protein bS6 to the central domain of the 16S rRNA, where it helps stabilize the platform of the 30S subunit. This is Small ribosomal subunit protein bS18 from Acinetobacter baumannii (strain AB307-0294).